Reading from the N-terminus, the 103-residue chain is Large ribosomal subunit protein bL21 (103 aa).

Belongs to the bacterial ribosomal protein bL21 family. In terms of assembly, part of the 50S ribosomal subunit. Contacts protein L20.

Its function is as follows. This protein binds to 23S rRNA in the presence of protein L20. The polypeptide is Large ribosomal subunit protein bL21 (Acetivibrio thermocellus (strain ATCC 27405 / DSM 1237 / JCM 9322 / NBRC 103400 / NCIMB 10682 / NRRL B-4536 / VPI 7372) (Clostridium thermocellum)).